We begin with the raw amino-acid sequence, 271 residues long: Dermonecrotic toxin LhSicTox-alphaIA2aiv (271 aa).

The active site involves histidine 3. Residues glutamate 23 and aspartate 25 each coordinate Mg(2+). Histidine 39 acts as the Nucleophile in catalysis. 2 cysteine pairs are disulfide-bonded: cysteine 43-cysteine 49 and cysteine 45-cysteine 188. Aspartate 83 provides a ligand contact to Mg(2+).

This sequence belongs to the arthropod phospholipase D family. Class II subfamily. The cofactor is Mg(2+). As to expression, expressed by the venom gland.

The protein resides in the secreted. It carries out the reaction an N-(acyl)-sphingosylphosphocholine = an N-(acyl)-sphingosyl-1,3-cyclic phosphate + choline. The catalysed reaction is an N-(acyl)-sphingosylphosphoethanolamine = an N-(acyl)-sphingosyl-1,3-cyclic phosphate + ethanolamine. It catalyses the reaction a 1-acyl-sn-glycero-3-phosphocholine = a 1-acyl-sn-glycero-2,3-cyclic phosphate + choline. The enzyme catalyses a 1-acyl-sn-glycero-3-phosphoethanolamine = a 1-acyl-sn-glycero-2,3-cyclic phosphate + ethanolamine. Its function is as follows. Dermonecrotic toxins cleave the phosphodiester linkage between the phosphate and headgroup of certain phospholipids (sphingolipid and lysolipid substrates), forming an alcohol (often choline) and a cyclic phosphate. This toxin acts on sphingomyelin (SM). It may also act on ceramide phosphoethanolamine (CPE), lysophosphatidylcholine (LPC) and lysophosphatidylethanolamine (LPE), but not on lysophosphatidylserine (LPS), and lysophosphatidylglycerol (LPG). It acts by transphosphatidylation, releasing exclusively cyclic phosphate products as second products. Induces dermonecrosis, hemolysis, increased vascular permeability, edema, inflammatory response, and platelet aggregation. This is Dermonecrotic toxin LhSicTox-alphaIA2aiv from Loxosceles hirsuta (Recluse spider).